The chain runs to 2587 residues: Fap1 adhesin (2587 aa).

A signal peptide spans 1–85 (MGKYKRAGET…ATVVSGNVFA (85 aa)). 4 disordered regions span residues 107 to 158 (SSEN…SESV), 173 to 212 (SISESVSESTSTSIVLSESGAASGNKATSKGTEEKQDSVR), 515 to 539 (DSIPSDTTSQSESTSKSESTSKSIS), and 568 to 2558 (ESIT…GENV). Positions 107 to 195 (SSENFDSEKA…IVLSESGAAS (89 aa)) are ser-rich region 1, SRR1. Composition is skewed to low complexity over residues 121-158 (SLSQSESASESVSESISESVSESVSTSESVSESVSESV) and 173-191 (SISESVSESTSTSIVLSES). The tract at residues 191-522 (SGAASGNKAT…NADSIPSDTT (332 aa)) is sufficient to block adherence to beads. Positions 192–202 (GAASGNKATSK) are enriched in polar residues. Basic and acidic residues predominate over residues 203-212 (GTEEKQDSVR). The tract at residues 516 to 2561 (SIPSDTTSQS…PNTGENVSSS (2046 aa)) is ser-rich region 2, SRR2. Composition is skewed to low complexity over residues 519–539 (SDTTSQSESTSKSESTSKSIS) and 568–2545 (ESIT…VSES). Positions 2367–2587 (SESISESVSE…RKKRKSEDAE (221 aa)) are required for localization to cell wall, fimbriae formation and adherence to saliva-coated hydroxyapatite beads (SHA) but not secretion. The LPXTG sorting signal signature appears at 2551 to 2555 (LPNTG). Threonine 2554 is subject to Pentaglycyl murein peptidoglycan amidated threonine. Positions 2555–2587 (GENVSSSLGLVGLSGLLFGALLGRKKRKSEDAE) are cleaved as a propeptide — removed by sortase.

It belongs to the serine-rich repeat protein (SRRP) family. Glycosylated; occurs within the cytoplasm. It is probable that most of the Ser residues in SSR1 and SSR2 are O-GlcNAcylated. Sequential glycosylation by sugar transferases are able to generate complex sugar polymorphisms.

It localises to the cytoplasm. The protein resides in the secreted. The protein localises to the cell wall. It is found in the fimbrium. Functionally, the major structural element of fimbriae. Required for adherence to saliva-coated hydroxyapatite beads (SHA), an in vitro tooth model. A Fap1-dependent increase in adherence is seen as the pH is reduced from pH 8 to pH 5. The polypeptide is Fap1 adhesin (fap1) (Streptococcus parasanguinis).